We begin with the raw amino-acid sequence, 126 residues long: Membrane-anchored ubiquitin-fold protein 2 (126 aa).

A Ubiquitin-like domain is found at 14–79 (VEVRFRLDDG…VLENNRTLAE (66 aa)). Cys123 bears the Cysteine methyl ester mark. A lipid anchor (S-geranylgeranyl cysteine) is attached at Cys123. Positions 124 to 126 (TIL) are cleaved as a propeptide — removed in mature form.

It localises to the cell membrane. May serve as docking site to facilitate the association of other proteins to the plasma membrane. This is Membrane-anchored ubiquitin-fold protein 2 (MUB2) from Oryza sativa subsp. japonica (Rice).